Here is a 469-residue protein sequence, read N- to C-terminus: MTQDSALLQAPEPMLRDGSNSRKVFIKTYGCQMNVYDSTRMSDALARDGYEPTEDMEEADLVLLNTCHIREKAAEKVYSALGRLREMKKKKAADGREMMIGVTGCVAQAEGEEILRRAPAVDVVIGPQTYHRLPEALRRAQQGQRVVDTEYAIEDKFEHLPIAESRKIRARGVTAFLTVQEGCDKFCTFCVVPYTRGSEVSRPVSQIVEEAEKLVEAGVREITLLGQNVNAWHGAGPRGEAWSLGDLLYRLAEIPGLARLRYTTSHPRDMDDRLIEAHRDLRALMPYLHLPVQSGSDRILKAMNRRHTAAEYLSLIERIRTVRPDIALSGDFITGFPGETDADFEDTLRLVEEVRYAQAFSFKYSTRPGTPGAELKDQVPEEIKAERLERLQALLLKQQQEFAESCIGKEIDLLLEKPGRMPGQLIGRSPWLQSVNVDAKASQIGDIIKVRITGTGTNSLFAERAEAAV.

The 121-residue stretch at 22–142 (RKVFIKTYGC…LPEALRRAQQ (121 aa)) folds into the MTTase N-terminal domain. [4Fe-4S] cluster-binding residues include Cys31, Cys67, Cys105, Cys183, Cys187, and Cys190. A Radical SAM core domain is found at 169–401 (RARGVTAFLT…QALLLKQQQE (233 aa)). The 63-residue stretch at 404 to 466 (ESCIGKEIDL…TNSLFAERAE (63 aa)) folds into the TRAM domain.

It belongs to the methylthiotransferase family. MiaB subfamily. Monomer. Requires [4Fe-4S] cluster as cofactor.

The protein resides in the cytoplasm. The catalysed reaction is N(6)-dimethylallyladenosine(37) in tRNA + (sulfur carrier)-SH + AH2 + 2 S-adenosyl-L-methionine = 2-methylsulfanyl-N(6)-dimethylallyladenosine(37) in tRNA + (sulfur carrier)-H + 5'-deoxyadenosine + L-methionine + A + S-adenosyl-L-homocysteine + 2 H(+). In terms of biological role, catalyzes the methylthiolation of N6-(dimethylallyl)adenosine (i(6)A), leading to the formation of 2-methylthio-N6-(dimethylallyl)adenosine (ms(2)i(6)A) at position 37 in tRNAs that read codons beginning with uridine. The chain is tRNA-2-methylthio-N(6)-dimethylallyladenosine synthase from Rhizobium etli (strain CIAT 652).